Consider the following 1518-residue polypeptide: MTGHVSKTSHVPKGRPSSLAKKAAKRAMAKVNSNPKRASGHLERVVQSVNDATKRLSQPDSTVSVATKSSKRKSRDTVGPWKLGKTLGKGSSGRVRLAKNMETGQLAAIKIVPKKKAFVHCSNNGTVPNSYSSSMVTSNVSSPSIASREHSNHSQTNPYGIEREIVIMKLISHTNVMALFEVWENKSELYLVLEYVDGGELFDYLVSKGKLPEREAIHYFKQIVEGVSYCHSFNICHRDLKPENLLLDKKNRRIKIADFGMAALELPNKLLKTSCGSPHYASPEIVMGRPYHGGPSDVWSCGIVLFALLTGHLPFNDDNIKKLLLKVQSGKYQMPSNLSSEARDLISKILVIDPEKRITTQEILKHPLIKKYDDLPVNKVLRKMRKDNMARGKSNSDLHLLNNVSPSIVTLHSKGEIDESILRSLQILWHGVSRELITAKLLQKPMSEEKLFYSLLLQYKQRHSISLSSSSENKKSATESSVNEPRIEYASKTANNTGLRSENNDVKTLHSLEIHSEDTSTVNQNNAITGVNTEINAPVLAQKSQFSINTLSQPESDKAEAEAVTLPPAIPIFNASSSRIFRNSYTSISSRSRRSLRLSNSRLSLSASTSRETVHDNEMPLPQLPKSPSRYSLSRRAIHASPSTKSIHKSLSRKNIAATVAARRTLQNSASKRSLYSLQSISKRSLNLNDLLVFDDPLPSKKPASENVNKSEPHSLESDSDFEILCDQILFGNALDRILEEEEDNEKERDTQRQRQNDTKSSADTFTISGVSTNKENEGPEYPTKIEKNQFNMSYKPSENMSGLSSFPIFEKENTLSSSYLEEQKPKRAALSDITNSFNKMNKQEGMRIEKKIQREQLQKKNDRPSPLKPIQHQELRVNSLPNDQGKPSLSLDPRRNISQPVNSKVESLLQGLKFKKEPASHWTHERGSLFMSEHVEDEKPVKASDVSIESSYVPLTTVATSSRDPSVLAESSTIQKPMLSLPSSFLNTSMTFKNLSQILADDGDDKHLSVPQNQSRSVAMSHPLRKQSAKISLTPRSNLNANLSVKRNQGSPGSYLSNDLDGISDMTFAMEIPTNTFTAQAIQLMNNDTDNNKINTSPKASSFTKEKVIKSAAYISKEKEPDNSDTNYIPDYTIPNTYDEKAINIFEDAPSDEGSLNTSSSESDSRASVHRKAVSIDTMATTNVLTPATNVRVSLYWNNNSSGIPRETTEEILSKLRLSPENPSNTHMQKRFSSTRGSRDSNALGISQSLQSMFKDLEEDQDGHTSQADILESSMSYSKRRPSEESVNPKQRVTMLFDEEEEESKKVGGGKIKEEHTKLDNKISEESSQLVLPVVEKKENANNTENNYSKIPKPSTIKVTKDTAMESNTQTHTKKPILKSVQNVEVEEAPSSDKKNWFVKLFQNFSSHNNATKASKNHVTNISFDDAHMLTLNEFNKNSIDYQLKNLDHKFGRKVVEYDCKFVKGNFKFKIKITSTPNASTVITVKKRSKHSNTSSNKAFEKFNDDVERVIRNAGRS.

Disordered stretches follow at residues 1–43 (MTGH…GHLE) and 55–83 (RLSQ…PWKL). Over residues 55 to 68 (RLSQPDSTVSVATK) the composition is skewed to polar residues. A Protein kinase domain is found at 81 to 369 (WKLGKTLGKG…TQEILKHPLI (289 aa)). Residues 87 to 95 (LGKGSSGRV) and lysine 110 each bind ATP. Aspartate 239 (proton acceptor) is an active-site residue. The disordered stretch occupies residues 467-502 (LSSSSENKKSATESSVNEPRIEYASKTANNTGLRSE). The span at 492 to 501 (KTANNTGLRS) shows a compositional bias: polar residues. Serine 511 is modified (phosphoserine). Over residues 599–611 (SNSRLSLSASTSR) the composition is skewed to low complexity. The interval 599–651 (SNSRLSLSASTSRETVHDNEMPLPQLPKSPSRYSLSRRAIHASPSTKSIHKSL) is disordered. Residues serine 629 and serine 685 each carry the phosphoserine modification. The disordered stretch occupies residues 741–783 (EEEDNEKERDTQRQRQNDTKSSADTFTISGVSTNKENEGPEYP). A compositionally biased stretch (basic and acidic residues) spans 746-758 (EKERDTQRQRQND). A compositionally biased stretch (polar residues) spans 759–774 (TKSSADTFTISGVSTN). Phosphoserine is present on residues serine 837 and serine 866. Basic and acidic residues predominate over residues 856 to 876 (EQLQKKNDRPSPLKPIQHQEL). 4 disordered regions span residues 856 to 898 (EQLQ…RRNI), 1005 to 1030 (DDKH…KQSA), 1150 to 1170 (APSD…RASV), and 1220 to 1243 (SPEN…RDSN). Serine 1220 is modified (phosphoserine). Over residues 1222 to 1243 (ENPSNTHMQKRFSSTRGSRDSN) the composition is skewed to polar residues. Serine 1250 bears the Phosphoserine mark. Residues 1259 to 1291 (EEDQDGHTSQADILESSMSYSKRRPSEESVNPK) are disordered. Residues 1265–1278 (HTSQADILESSMSY) show a composition bias toward polar residues. Serine 1284, serine 1287, and serine 1325 each carry phosphoserine.

Belongs to the protein kinase superfamily. CAMK Ser/Thr protein kinase family. NIM1 subfamily.

It localises to the bud neck. It catalyses the reaction L-seryl-[protein] + ATP = O-phospho-L-seryl-[protein] + ADP + H(+). It carries out the reaction L-threonyl-[protein] + ATP = O-phospho-L-threonyl-[protein] + ADP + H(+). The chain is Probable serine/threonine-protein kinase HSL1 (HSL1) from Saccharomyces cerevisiae (strain ATCC 204508 / S288c) (Baker's yeast).